The sequence spans 464 residues: E3 ubiquitin-protein ligase parkin (464 aa).

The region spanning 1 to 76 (MIVFVRFNSS…VHIVQRPRRR (76 aa)) is the Ubiquitin-like domain. Residue Ser65 is modified to Phosphoserine; by PINK1. A disordered region spans residues 70-96 (VQRPRRRSHETNASGGDEPQSTSEGSI). Residues 77 to 236 (SHETNASGGD…LITSNRRSIP (160 aa)) are necessary for PINK1-dependent localization to mitochondria. Thr80 is modified (phosphothreonine). The span at 80–96 (TNASGGDEPQSTSEGSI) shows a compositional bias: polar residues. The RING-type 0; atypical zinc finger occupies 140 to 224 (PTYNSFFIYC…PTSDKDTSVA (85 aa)). A Phosphothreonine; by PINK1 modification is found at Thr174. Residues 203-237 (TRAEFFFKCGAHPTSDKDTSVALNLITSNRRSIPC) are SYT11 binding 1. The residue at position 216 (Thr216) is a Phosphothreonine. The interval 233-464 (RSIPCIACTD…ACMGDHWFDV (232 aa)) is TRIAD supradomain. 10 residues coordinate Zn(2+): Cys237, Cys240, Cys252, His256, Cys259, Cys262, Cys288, Cys292, Cys331, and Cys336. The segment at 237–292 (CIACTDVRSPVLVFQCNHRHVICLDCFHLYCVTRLNDRQFVHDAQLGYSLPCVAGC) adopts an RING-type 1 zinc-finger fold. The SYT11 binding 2 stretch occupies residues 256 to 292 (HVICLDCFHLYCVTRLNDRQFVHDAQLGYSLPCVAGC). The IBR-type zinc-finger motif lies at 312–376 (TRYQQYGAEE…CKEAYHEGDC (65 aa)). Lys348 participates in a covalent cross-link: Glycyl lysine isopeptide (Lys-Gly) (interchain with G-Cter in ISG15). Zn(2+) is bound by residues Cys351, Cys359, Cys364, and Cys367. Residue Lys368 forms a Glycyl lysine isopeptide (Lys-Gly) (interchain with G-Cter in ISG15) linkage. His372 and Cys376 together coordinate Zn(2+). The tract at residues 377–409 (DSLLEPSGATSQAYRVDKRAAEQARWEEASKET) is REP. 2 residues coordinate Zn(2+): Cys417 and Cys420. The RING-type 2; atypical zinc finger occupies 417 to 448 (CPRCNVPIEKNGGCMHMKCPQPQCKLEWCWNC). Residue Cys430 is part of the active site. Positions 435, 440, 445, 448, 456, and 460 each coordinate Zn(2+).

It belongs to the RBR family. Parkin subfamily. Forms an E3 ubiquitin ligase complex with UBE2L3 or UBE2L6. Mediates 'Lys-63'-linked polyubiquitination by associating with UBE2V1. Part of a SCF-like complex, consisting of PRKN, CUL1 and FBXW7. Interacts with SNCAIP. Binds to the C2A and C2B domains of SYT11. Interacts and regulates the turnover of SEPTIN5. Part of a complex, including STUB1, HSP70 and GPR37. The amount of STUB1 in the complex increases during ER stress. STUB1 promotes the dissociation of HSP70 from PRKN and GPR37, thus facilitating PRKN-mediated GPR37 ubiquitination. HSP70 transiently associates with unfolded GPR37 and inhibits the E3 activity of PRKN, whereas, STUB1 enhances the E3 activity of PRKN through promotion of dissociation of HSP70 from PRKN-GPR37 complexes. Interacts with PSMD4 and PACRG. Interacts with LRRK2. Interacts with RANBP2. Interacts with SUMO1 but not SUMO2, which promotes nuclear localization and autoubiquitination. Interacts (via first RING-type domain) with AIMP2 (via N-terminus). Interacts with PSMA7 and RNF41. Interacts with PINK1. Forms a complex with PINK1 and PARK7. Interacts with CHPF, the interaction with isoform 2 may facilitate PRKN transport into the mitochondria. Interacts with MFN2 (phosphorylated), promotes PRKN localization in dysfunctional depolarized mitochondria. Interacts with FBXO7; this promotes translocation to dysfunctional depolarized mitochondria. Interacts with ZNF746. Interacts with heat shock protein 70 family members, including HSPA1L, HSPA1A and HSPA8; interaction HSPA1L promotes translocation to damaged mitochondria. Interacts with BAG4 and, to a lesser extent, BAG5; interaction with BAG4 inhibits translocation to damaged mitochondria. Forms a complex with PRKN and PARK7. Interacts with AMBRA1. Post-translationally, auto-ubiquitinates in an E2-dependent manner leading to its own degradation. Also polyubiquitinated by RNF41 for proteasomal degradation. In terms of processing, S-nitrosylated. Phosphorylated. Activation requires phosphorylation at Ser-65 by PINK1 and binding to PINK1 phosphorylated ubiquitin. Phosphorylation at Thr-174 by PINK1 and at Thr-216 is important for mitochondrial localization. As to expression, expressed in all subdivisions of the brain (at protein level). Highly expressed in brainstem, cranial nerve, pontine, cerebellar nuclei, indusium griseum, nuclei reticularis, strata oriens and laccunosum moleculare of the hippocampal CA2 region. Low levels were found in the telencephalon and diencephalon. Expressed in heart, liver, skeletal muscle, kidney and testis.

It localises to the cytoplasm. The protein localises to the cytosol. It is found in the nucleus. The protein resides in the endoplasmic reticulum. Its subcellular location is the mitochondrion. It localises to the mitochondrion outer membrane. The protein localises to the cell projection. It is found in the neuron projection. The protein resides in the postsynaptic density. Its subcellular location is the presynapse. The enzyme catalyses [E2 ubiquitin-conjugating enzyme]-S-ubiquitinyl-L-cysteine + [acceptor protein]-L-lysine = [E2 ubiquitin-conjugating enzyme]-L-cysteine + [acceptor protein]-N(6)-ubiquitinyl-L-lysine.. It participates in protein modification; protein ubiquitination. Its activity is regulated as follows. In the autoinhibited state the side chain of Phe-462 inserts into a hydrophobic groove in RING-0, occluding the ubiquitin acceptor site Cys-430, whereas the REP repressor element binds RING-1 and blocks its E2-binding site. Activation of PRKN requires 2 steps: (1) phosphorylation at Ser-65 by PINK1 and (2) binding to phosphorylated ubiquitin, leading to unlock repression of the catalytic Cys-430 by the RING-0 region via an allosteric mechanism and converting PRKN to its fully-active form. According to another report, phosphorylation at Ser-65 by PINK1 is not essential for activation and only binding to phosphorylated ubiquitin is essential to unlock repression. In addition, ISG15 conjugation positively regulates its ubiquitin E3 ligase activity by suppressing the intramolecular interaction that maintains its autoinhibited conformation. Its function is as follows. Functions within a multiprotein E3 ubiquitin ligase complex, catalyzing the covalent attachment of ubiquitin moieties onto substrate proteins. Substrates include SYT11 and VDAC1. Other substrates are BCL2, CCNE1, GPR37, RHOT1/MIRO1, MFN1, MFN2, STUB1, SNCAIP, SEPTIN5, TOMM20, USP30, ZNF746, MIRO1 and AIMP2. Mediates monoubiquitination as well as 'Lys-6', 'Lys-11', 'Lys-48'-linked and 'Lys-63'-linked polyubiquitination of substrates depending on the context. Participates in the removal and/or detoxification of abnormally folded or damaged protein by mediating 'Lys-63'-linked polyubiquitination of misfolded proteins such as PARK7: 'Lys-63'-linked polyubiquitinated misfolded proteins are then recognized by HDAC6, leading to their recruitment to aggresomes, followed by degradation. Mediates 'Lys-63'-linked polyubiquitination of a 22 kDa O-linked glycosylated isoform of SNCAIP, possibly playing a role in Lewy-body formation. Mediates monoubiquitination of BCL2, thereby acting as a positive regulator of autophagy. Protects against mitochondrial dysfunction during cellular stress, by acting downstream of PINK1 to coordinate mitochondrial quality control mechanisms that remove and replace dysfunctional mitochondrial components. Depending on the severity of mitochondrial damage and/or dysfunction, activity ranges from preventing apoptosis and stimulating mitochondrial biogenesis to regulating mitochondrial dynamics and eliminating severely damaged mitochondria via mitophagy. Activation and recruitment onto the outer membrane of damaged/dysfunctional mitochondria (OMM) requires PINK1-mediated phosphorylation of both PRKN and ubiquitin. After mitochondrial damage, functions with PINK1 to mediate the decision between mitophagy or preventing apoptosis by inducing either the poly- or monoubiquitination of VDAC1, respectively; polyubiquitination of VDAC1 promotes mitophagy, while monoubiquitination of VDAC1 decreases mitochondrial calcium influx which ultimately inhibits apoptosis. When cellular stress results in irreversible mitochondrial damage, promotes the autophagic degradation of dysfunctional depolarized mitochondria (mitophagy) by promoting the ubiquitination of mitochondrial proteins such as TOMM20, RHOT1/MIRO1, MFN1 and USP30. Preferentially assembles 'Lys-6'-, 'Lys-11'- and 'Lys-63'-linked polyubiquitin chains, leading to mitophagy. The PINK1-PRKN pathway also promotes fission of damaged mitochondria by PINK1-mediated phosphorylation which promotes the PRKN-dependent degradation of mitochondrial proteins involved in fission such as MFN2. This prevents the refusion of unhealthy mitochondria with the mitochondrial network or initiates mitochondrial fragmentation facilitating their later engulfment by autophagosomes. Regulates motility of damaged mitochondria via the ubiquitination and subsequent degradation of MIRO1 and MIRO2; in motor neurons, this likely inhibits mitochondrial intracellular anterograde transport along the axons which probably increases the chance of the mitochondria undergoing mitophagy in the soma. Involved in mitochondrial biogenesis via the 'Lys-48'-linked polyubiquitination of transcriptional repressor ZNF746/PARIS which leads to its subsequent proteasomal degradation and allows activation of the transcription factor PPARGC1A. Limits the production of reactive oxygen species (ROS). Regulates cyclin-E during neuronal apoptosis. In collaboration with CHPF isoform 2, may enhance cell viability and protect cells from oxidative stress. Independently of its ubiquitin ligase activity, protects from apoptosis by the transcriptional repression of p53/TP53. May protect neurons against alpha synuclein toxicity, proteasomal dysfunction, GPR37 accumulation, and kainate-induced excitotoxicity. May play a role in controlling neurotransmitter trafficking at the presynaptic terminal and in calcium-dependent exocytosis. May represent a tumor suppressor gene. The polypeptide is E3 ubiquitin-protein ligase parkin (Mus musculus (Mouse)).